A 205-amino-acid polypeptide reads, in one-letter code: Small ribosomal subunit protein uS4 (205 aa).

The S4 RNA-binding domain maps to 110 to 172 (RRLQTIIYRK…VGSPITKEKL (63 aa)). Positions 173–205 (MAKPQPASAPKAAAAPKAAAAPAEAAAAPKKEE) are disordered. Residues 174 to 205 (AKPQPASAPKAAAAPKAAAAPAEAAAAPKKEE) are compositionally biased toward low complexity.

The protein belongs to the universal ribosomal protein uS4 family. In terms of assembly, part of the 30S ribosomal subunit. Contacts protein S5. The interaction surface between S4 and S5 is involved in control of translational fidelity.

Functionally, one of the primary rRNA binding proteins, it binds directly to 16S rRNA where it nucleates assembly of the body of the 30S subunit. In terms of biological role, with S5 and S12 plays an important role in translational accuracy. The protein is Small ribosomal subunit protein uS4 of Methanocella arvoryzae (strain DSM 22066 / NBRC 105507 / MRE50).